The chain runs to 305 residues: UDP-3-O-acyl-N-acetylglucosamine deacetylase (305 aa).

Zn(2+)-binding residues include His-78, His-235, and Asp-239. His-262 (proton donor) is an active-site residue.

This sequence belongs to the LpxC family. Zn(2+) serves as cofactor.

It catalyses the reaction a UDP-3-O-[(3R)-3-hydroxyacyl]-N-acetyl-alpha-D-glucosamine + H2O = a UDP-3-O-[(3R)-3-hydroxyacyl]-alpha-D-glucosamine + acetate. Its pathway is glycolipid biosynthesis; lipid IV(A) biosynthesis; lipid IV(A) from (3R)-3-hydroxytetradecanoyl-[acyl-carrier-protein] and UDP-N-acetyl-alpha-D-glucosamine: step 2/6. In terms of biological role, catalyzes the hydrolysis of UDP-3-O-myristoyl-N-acetylglucosamine to form UDP-3-O-myristoylglucosamine and acetate, the committed step in lipid A biosynthesis. The sequence is that of UDP-3-O-acyl-N-acetylglucosamine deacetylase from Geobacter sp. (strain M21).